Reading from the N-terminus, the 265-residue chain is Short-chain dehydrogenase/reductase phqE (265 aa).

Residues Thr-23, Ser-24, Ile-26, Ser-46, Asn-47, Lys-50, Asp-76, Arg-131, Val-203, and Thr-205 each coordinate NADP(+). The helical transmembrane segment at 25-45 (GIGFAVCAAALGHGAIVTIVG) threads the bilayer.

Belongs to the short-chain dehydrogenases/reductases (SDR) family. The cofactor is NADP(+).

The protein resides in the membrane. Its pathway is alkaloid biosynthesis. Short-chain dehydrogenase/reductase; part of the gene cluster that mediates the biosynthesis of paraherquamide, a fungal indole alkaloid that belongs to a family of natural products containing a characteristic bicyclo[2.2.2]diazaoctane core. The first steps in the biosynthesis of paraherquamide is the production of the beta-methyl-proline precursor from L-isoleucine. They require oxidation of a terminally hydroxylated L-isoleucine to the corresponding aldehyde by enzymes which have still to be identified. Spontaneous cyclization and dehydration would yield the 4-methyl pyrolline-5-carboxylic acid, which is then reduced by the pyrroline-5-carboxylate reductase phqD leading to the beta-methyl-proline precursor. The next step of paraherquamide biosynthesis involves coupling of beta-methyl-proline and L-tryptophan by the bimodular NRPS phqB, to produce a monooxopiperazine intermediate. The reductase (R) domain of phqB utilizes NADPH for hydride transfer to reduce the thioester bond of the T domain-tethered linear dipeptide to a hemithioaminal intermediate, which spontaneously cleaves the C-S bond to release the aldehyde product. This compound undergoes spontaneous cyclization and dehydration to give a dienamine which is reverse prenylated at C-2 by the reverse prenyltransferase phqJ. The other prenyltransferase present in the cluster, phqI may be a redundant gene in the pathway. During biosynthetic assembly, the key step to produce the polycyclic core is catalyzed by the bifunctional reductase and intramolecular [4+2] Diels-Alderase, phqE, resulting in formation of the [2.2.2] diazaoctane intermediate preparaherquamide. Following formation of preparaherquamide, an indole 2,3-epoxidation-initiated pinacol-like rearrangement is catalyzed by the phqK FAD-dependent monooxygenase. The prenyltransferase phqA, the cytochrome P450 monooxygenase phqL, and the FAD-linked oxidoreductase phqH (or the cytochrome P450 monooxygenase phqM), are proposed to be involved in the formation of the pyran ring. The FAD-dependent monooxygenase phqK is likely responsible for generation of the spiro-oxindole, and the N-methylation is likely mediated by the phqN methyltransferase leading to the isolable natural product paraherquamide F. However, the order of these biosynthetic steps has still to be determined. In late-stage paraherquamide biosynthesis, the third P450 monooxygenase, phqO, is probably responsible for the C-14 hydroxylation, transforming paraherquamide F to paraherquamide G, and paraherquamide E to the final product paraherquamide A. The expansion from the 6-membered ring pyran (in paraherquamides F and G) to the 7-membered dioxepin ring (in paraherquamides A and E) represents a poorly understood but intriguing process that probably involves the 2-oxoglutarate-dependent dioxygenase phqC. Finally, the remaining members of the paraherquamide cluster, including phqI as well as phqM (or phqH), do not have a clearly prescribed role and appear to be redundant. This chain is Short-chain dehydrogenase/reductase phqE, found in Penicillium fellutanum.